Consider the following 273-residue polypeptide: Cysteine protease S273R (273 aa).

Active-site residues include histidine 168 and asparagine 187. Glutamine 226 serves as a coordination point for substrate. Catalysis depends on cysteine 232, which acts as the Nucleophile.

This sequence belongs to the peptidase C63 family.

The protein resides in the host cytoplasm. It localises to the virion. Cysteine protease that plays several role during infection including processing of the structural polyprotein or inhibition of the host immune response. Catalyzes the maturation of the pp220 and pp62 polyprotein precursors into core-shell proteins. Plays a role in the disruption of host pyroptosis via specific cleavage of gasdermin D/GSDMD. In addition, strongly decreases the host cGAS-STING signaling by targeting IKBKE via its enzymatic activity. Also impairs host FOXJ1-mediated antiviral effect via degradation of FOXJ1. This is Cysteine protease S273R from African swine fever virus (isolate Tick/Malawi/Lil 20-1/1983) (ASFV).